An 885-amino-acid polypeptide reads, in one-letter code: Translation initiation factor IF-2 (885 aa).

The segment at 1-295 (MTDNKDDKTI…EKFKRSQMQE (295 aa)) is disordered. Over residues 63-77 (PVAAAPAAARPAEQR) the composition is skewed to low complexity. Residues 78–94 (PMPPQPSGRPAPQPQPH) are compositionally biased toward pro residues. A compositionally biased stretch (basic and acidic residues) spans 130 to 183 (RDAEEAKRRAEEEVRRRREEEERIAREKEEAARRAAEEAARPAVEAEKVEEKVE). A compositionally biased stretch (low complexity) spans 184–201 (AATPAVAETRPLSERPAP). One can recognise a tr-type G domain in the interval 383–550 (ARPPIVTIMG…AILLQSEILD (168 aa)). The tract at residues 392–399 (GHVDHGKT) is G1. 392 to 399 (GHVDHGKT) lines the GTP pocket. Positions 417–421 (GITQH) are G2. The segment at 438 to 441 (DTPG) is G3. Residues 438-442 (DTPGH) and 492-495 (NKID) each bind GTP. Residues 492–495 (NKID) form a G4 region. The G5 stretch occupies residues 528 to 530 (SAK).

The protein belongs to the TRAFAC class translation factor GTPase superfamily. Classic translation factor GTPase family. IF-2 subfamily.

The protein resides in the cytoplasm. Functionally, one of the essential components for the initiation of protein synthesis. Protects formylmethionyl-tRNA from spontaneous hydrolysis and promotes its binding to the 30S ribosomal subunits. Also involved in the hydrolysis of GTP during the formation of the 70S ribosomal complex. The protein is Translation initiation factor IF-2 of Sinorhizobium medicae (strain WSM419) (Ensifer medicae).